The sequence spans 427 residues: Protein TIFY 6a (427 aa).

A compositionally biased stretch (basic and acidic residues) spans 1–25 (MERDFLGAIGRKEEAAGKPEEHSDY). Residues 1-33 (MERDFLGAIGRKEEAAGKPEEHSDYRGGGGGAS) are disordered. One can recognise a Tify domain in the interval 196–231 (QNPKVTQMTIFYDGLVNVFDNIPVEKAQELMLLASR). Composition is skewed to polar residues over residues 293–303 (LPKSSSSSNDS) and 317–327 (PLSQASPSQPI). The tract at residues 293-327 (LPKSSSSSNDSAGPKSGGLPLAVTPLSQASPSQPI) is disordered. The Jas signature appears at 343-367 (PQARKASLARFLEKRKERVSSVAPY). A Nuclear localization signal motif is present at residues 345 to 352 (ARKASLAR). Residues 360 to 427 (RVSSVAPYPS…QEPPSTKLQI (68 aa)) are disordered. 2 stretches are compositionally biased toward polar residues: residues 369–402 (SSKS…NNCE) and 411–427 (RNIS…KLQI).

It belongs to the TIFY/JAZ family. Ubiquitinated.

The protein localises to the nucleus. Functionally, repressor of jasmonate responses. The protein is Protein TIFY 6a of Oryza sativa subsp. indica (Rice).